The primary structure comprises 223 residues: Voltage-dependent calcium channel gamma-1 subunit (223 aa).

The Cytoplasmic segment spans residues 1 to 10; sequence MSQTKTAKVR. A helical membrane pass occupies residues 11 to 29; sequence VTLFFILVGGVLAMVAVVT. Topologically, residues 30 to 109 are extracellular; the sequence is DHWAVLSPHL…TQKEYSISAA (80 aa). Asparagine 43 and asparagine 80 each carry an N-linked (GlcNAc...) asparagine glycan. A disulfide bridge links cysteine 57 with cysteine 81. A helical transmembrane segment spans residues 110 to 130; the sequence is AIAIFSLGFIIVGSICAFLSF. The Cytoplasmic segment spans residues 131–135; the sequence is GNKRD. A helical transmembrane segment spans residues 136–156; it reads YLLRPASMFYAFAGLCLIVSV. Over 157-180 the chain is Extracellular; the sequence is EVMRQSVKRMIDSEDTVWIEHYYS. Residues 181-205 traverse the membrane as a helical segment; the sequence is WSFACACAAFILLFLGGLFLLLFSL. The Cytoplasmic portion of the chain corresponds to 206–223; the sequence is PRMPQNPWESCMDAEPEH.

This sequence belongs to the PMP-22/EMP/MP20 family. CACNG subfamily. Component of a calcium channel complex consisting of a pore-forming alpha subunit (CACNA1S) and the ancillary subunits CACNB1 or CACNB2, CACNG1 and CACNA2D1. The channel complex contains alpha, beta, gamma and delta subunits in a 1:1:1:1 ratio, i.e. it contains either CACNB1 or CACNB2. Post-translationally, N-glycosylated. As to expression, detected in skeletal muscle (at protein level).

The protein resides in the cell membrane. The protein localises to the sarcolemma. In terms of biological role, regulatory subunit of the voltage-gated calcium channel that gives rise to L-type calcium currents in skeletal muscle. Regulates channel inactivation kinetics. The polypeptide is Voltage-dependent calcium channel gamma-1 subunit (Cacng1) (Mus musculus (Mouse)).